The primary structure comprises 428 residues: Probable 4-methylmuconolactone transporter (428 aa).

Topologically, residues 1–26 (MFAWYKAGSPQQKKTFWACYSGWALD) are cytoplasmic. The chain crosses the membrane as a helical span at residues 27-47 (SFDMQMFSFLLPALTLTWGLT). The Periplasmic portion of the chain corresponds to 48–50 (KAE). The chain crosses the membrane as a helical span at residues 51 to 71 (VGVLGTVALVVTAIGGWGAGI). Residues 72–80 (LSDRYGRAR) are Cytoplasmic-facing. A helical membrane pass occupies residues 81–101 (ILVLAIIWFTLFGVLAGFAQS). Over 102–110 (YQQLLIART) the chain is Periplasmic. A helical transmembrane segment spans residues 111–131 (LQGLGFGGEWAVGAALMAEVI). The Cytoplasmic portion of the chain corresponds to 132 to 145 (DSRHRGKAIGFVQS). Residues 146–166 (GFALGWALAVVVATLLLAWLP) form a helical membrane-spanning segment. A topological domain (periplasmic) is located at residue Lys-167. A helical membrane pass occupies residues 168-188 (EMAWRVAFWSGIIPALIVLFI). The Cytoplasmic portion of the chain corresponds to 189–227 (RRHVKDSSMFERARQSRAPRASLSSVFNRKYARTLALSS). The chain crosses the membrane as a helical span at residues 228–248 (VLVIGLQAGCYAILVWLPSLL). Residues 249–252 (NQRQ) are Periplasmic-facing. Residues 253–273 (VAAGSMIVTVFIMAFGSFCGF) form a helical membrane-spanning segment. Over 274–287 (AVTADLSDRIGRRP) the chain is Cytoplasmic. A helical transmembrane segment spans residues 288–308 (TLILLSVCAWIVTVSYMLLPL). Topologically, residues 309 to 314 (NTTLTA) are periplasmic. The chain crosses the membrane as a helical span at residues 315–335 (ILGFLVGFSAIGMFAALGPFL). At 336-356 (SELFPTNVRTTCMGFAYNVGK) the chain is on the cytoplasmic side. A helical membrane pass occupies residues 357–371 (SIGAGSVVGVGVLST). Residues 372 to 377 (HIGLAN) are Periplasmic-facing. Residues 378-398 (AMGTFCLVAYAFAVFGIMLLP) form a helical membrane-spanning segment. Over 399–428 (ETRGIAIENIGEADAHSPAAPLAQPASARS) the chain is Cytoplasmic.

The protein belongs to the major facilitator superfamily. Sugar transporter (TC 2.A.1.1) family.

The protein resides in the cell inner membrane. Functionally, probable uptake of 4-methylmuconolactone. This Cupriavidus pinatubonensis (strain JMP 134 / LMG 1197) (Cupriavidus necator (strain JMP 134)) protein is Probable 4-methylmuconolactone transporter.